A 179-amino-acid chain; its full sequence is Large ribosomal subunit protein uL5 (179 aa).

Belongs to the universal ribosomal protein uL5 family. As to quaternary structure, part of the 50S ribosomal subunit; part of the 5S rRNA/L5/L18/L25 subcomplex. Contacts the 5S rRNA and the P site tRNA. Forms a bridge to the 30S subunit in the 70S ribosome.

In terms of biological role, this is one of the proteins that bind and probably mediate the attachment of the 5S RNA into the large ribosomal subunit, where it forms part of the central protuberance. In the 70S ribosome it contacts protein S13 of the 30S subunit (bridge B1b), connecting the 2 subunits; this bridge is implicated in subunit movement. Contacts the P site tRNA; the 5S rRNA and some of its associated proteins might help stabilize positioning of ribosome-bound tRNAs. The polypeptide is Large ribosomal subunit protein uL5 (Delftia acidovorans (strain DSM 14801 / SPH-1)).